The following is a 424-amino-acid chain: MPEVKVPELAESITEGTIAEWLKQVGDSVDKGEAIVELETDKVNVEVVSEEAGVLQELLANEGDTVEVGQAIAVVGEGSGNNTSEAPAKQEAPKQETETSTDDKSAQPAEATSNDTDDKSQDNNQRVNATPSARKYAREKGIDLSEIAAASNDVVRKEHVDQSQTQTSTQQQAQPAAKEETKKLTQQNPSKPVIREKMSRRKKTAAKKLLEVSNNTAMLTTFNEIDMTNVMDLRKRKKEQFIKDHDGTKLGFMSFFTKAAVAALKKYPEVNAEIDGDDMITKQYYDIGVAVSTEDGLLVPFVRDCDKKNFAEIEDEIGNLAKKARDKKLGLDDMVNGSFTITNGGIFGSMMSTPIINGSQAAILGMHSIITRPIAIDADTIENRPMMYIALSYDHRIIDGKEAVGFLKTIKELIENPEDLLLES.

In terms of domain architecture, Lipoyl-binding spans 1-76; sequence MPEVKVPELA…EVGQAIAVVG (76 aa). At lysine 42 the chain carries N6-lipoyllysine. Disordered stretches follow at residues 76-138 and 155-204; these read GEGS…KYAR and VRKE…RKKT. The span at 91 to 105 shows a compositional bias: basic and acidic residues; that stretch reads EAPKQETETSTDDKS. A compositionally biased stretch (polar residues) spans 122-131; sequence DNNQRVNATP. One can recognise a Peripheral subunit-binding (PSBD) domain in the interval 128–164; that stretch reads NATPSARKYAREKGIDLSEIAAASNDVVRKEHVDQSQ. The segment covering 162-176 has biased composition (low complexity); sequence QSQTQTSTQQQAQPA. Active-site residues include histidine 395 and aspartate 399.

Belongs to the 2-oxoacid dehydrogenase family. As to quaternary structure, forms a 24-polypeptide structural core with octahedral symmetry. Part of the 2-oxoglutarate dehydrogenase (OGDH) complex composed of E1 (2-oxoglutarate dehydrogenase), E2 (dihydrolipoamide succinyltransferase) and E3 (dihydrolipoamide dehydrogenase); the complex contains multiple copies of the three enzymatic components (E1, E2 and E3). (R)-lipoate is required as a cofactor.

It carries out the reaction N(6)-[(R)-dihydrolipoyl]-L-lysyl-[protein] + succinyl-CoA = N(6)-[(R)-S(8)-succinyldihydrolipoyl]-L-lysyl-[protein] + CoA. It participates in amino-acid degradation; L-lysine degradation via saccharopine pathway; glutaryl-CoA from L-lysine: step 6/6. E2 component of the 2-oxoglutarate dehydrogenase (OGDH) complex which catalyzes the second step in the conversion of 2-oxoglutarate to succinyl-CoA and CO(2). The sequence is that of Dihydrolipoyllysine-residue succinyltransferase component of 2-oxoglutarate dehydrogenase complex (odhB) from Staphylococcus saprophyticus subsp. saprophyticus (strain ATCC 15305 / DSM 20229 / NCIMB 8711 / NCTC 7292 / S-41).